We begin with the raw amino-acid sequence, 643 residues long: 1-deoxy-D-xylulose-5-phosphate synthase (643 aa).

Residues His-72 and Gly-113–Ala-115 each bind thiamine diphosphate. Asp-144 is a Mg(2+) binding site. Residues Gly-145 to Ala-146, Asn-174, Tyr-287, and Glu-370 each bind thiamine diphosphate. Asn-174 provides a ligand contact to Mg(2+).

It belongs to the transketolase family. DXPS subfamily. In terms of assembly, homodimer. Mg(2+) serves as cofactor. Requires thiamine diphosphate as cofactor.

The catalysed reaction is D-glyceraldehyde 3-phosphate + pyruvate + H(+) = 1-deoxy-D-xylulose 5-phosphate + CO2. The protein operates within metabolic intermediate biosynthesis; 1-deoxy-D-xylulose 5-phosphate biosynthesis; 1-deoxy-D-xylulose 5-phosphate from D-glyceraldehyde 3-phosphate and pyruvate: step 1/1. In terms of biological role, catalyzes the acyloin condensation reaction between C atoms 2 and 3 of pyruvate and glyceraldehyde 3-phosphate to yield 1-deoxy-D-xylulose-5-phosphate (DXP). The protein is 1-deoxy-D-xylulose-5-phosphate synthase of Prochlorococcus marinus (strain MIT 9211).